The chain runs to 282 residues: Structure-specific endonuclease subunit slx1 (282 aa).

The 91-residue stretch at 7 to 97 (GFYGVYLLFC…RLTHVPRKTK (91 aa)) folds into the GIY-YIG domain. The SLX1-type zinc-finger motif lies at 191–243 (CRVCYERVQDKDDSLHCFHPGCTLTAHIMCLAKLFLLNEPQNLIPVEGLCPSC).

This sequence belongs to the SLX1 family. In terms of assembly, forms a heterodimer with slx4. A divalent metal cation is required as a cofactor.

It is found in the nucleus. Catalytic subunit of the slx1-slx4 structure-specific endonuclease that resolves DNA secondary structures generated during DNA repair and recombination. Has endonuclease activity towards branched DNA substrates, introducing single-strand cuts in duplex DNA close to junctions with ss-DNA. The protein is Structure-specific endonuclease subunit slx1 (slx1a) of Xenopus laevis (African clawed frog).